We begin with the raw amino-acid sequence, 525 residues long: Lymphocyte activation gene 3 protein (525 aa).

A signal peptide spans 1–22; that stretch reads MWEAQFLGLLFLQPLWVAPVKP. The Extracellular segment spans residues 23-450; that stretch reads LQPGAEVPVV…APGALPAGHL (428 aa). Positions 37–167 constitute an Ig-like V-type domain; the sequence is GAPAQLPCSP…LSCRLRLRLG (131 aa). The tract at residues 37-252 is interaction with FGL1; that stretch reads GAPAQLPCSP…LTYRDGFNVS (216 aa). Cys44 and Cys160 are disulfide-bonded. The tract at residues 62–97 is disordered; it reads TWQHQPDSGPPAAAPGHPLAPGPHPAAPSSWGPRPR. The segment covering 69 to 87 has biased composition (pro residues); that stretch reads SGPPAAAPGHPLAPGPHPA. The Ig-like C2-type 1 domain maps to 168 to 252; that stretch reads QASMTASPPG…LTYRDGFNVS (85 aa). An N-linked (GlcNAc...) asparagine glycan is attached at Asn188. A disulfide bridge links Cys189 with Cys241. 2 N-linked (GlcNAc...) asparagine glycosylation sites follow: Asn250 and Asn256. 2 Ig-like C2-type domains span residues 265 to 343 and 348 to 419; these read PTPL…QQLN and LAII…QGER. Cys282 and Cys333 are joined by a disulfide. The N-linked (GlcNAc...) asparagine glycan is linked to Asn343. Cys369 and Cys412 form a disulfide bridge. Positions 429–450 are connecting peptide; sequence ELSSPGAQRSGRAPGALPAGHL. Residues 451–471 traverse the membrane as a helical segment; it reads LLFLILGVLSLLLLVTGAFGF. The Cytoplasmic portion of the chain corresponds to 472-525; sequence HLWRRQWRPRRFSALEQGIHPPQAQSKIEELEQEPEPEPEPEPEPEPEPEPEQL. Residues 487–525 form a disordered region; it reads EQGIHPPQAQSKIEELEQEPEPEPEPEPEPEPEPEPEQL. The short motif at 498-503 is the KIEELE motif element; sequence KIEELE. The tract at residues 501–524 is 12 X 2 AA tandem repeats of E-X; sequence ELEQEPEPEPEPEPEPEPEPEPEQ. Positions 502–525 are enriched in acidic residues; the sequence is LEQEPEPEPEPEPEPEPEPEPEQL.

Belongs to the LAG3 family. As to quaternary structure, interacts with MHC class II (MHC-II); selectively recognizes stable complexes of peptide and MHC-II. Interacts with FGL1 (via the Fibrinogen C-terminal domain). Proteolytically cleaved by ADAM10 and ADAM17 within the connecting peptide region, leading to release of Secreted lymphocyte activation gene 3 protein (sLAG-3). ADAM10 mediates constitutive cleavage, but cleavage increases following T-cell activation, whereas shedding by ADAM17 is induced by TCR signaling in a PRKCQ-dependent manner. Primarily expressed in activated T-cells and a subset of natural killer (NK) cells.

The protein localises to the cell membrane. It is found in the secreted. Lymphocyte activation gene 3 protein: Inhibitory receptor on antigen activated T-cells. Delivers inhibitory signals upon binding to ligands, such as FGL1. FGL1 constitutes a major ligand of LAG3 and is responsible for LAG3 T-cell inhibitory function. Following TCR engagement, LAG3 associates with CD3-TCR in the immunological synapse and directly inhibits T-cell activation. May inhibit antigen-specific T-cell activation in synergy with PDCD1/PD-1, possibly by acting as a coreceptor for PDCD1/PD-1. Negatively regulates the proliferation, activation, effector function and homeostasis of both CD8(+) and CD4(+) T-cells. Also mediates immune tolerance: constitutively expressed on a subset of regulatory T-cells (Tregs) and contributes to their suppressive function. Also acts as a negative regulator of plasmacytoid dendritic cell (pDCs) activation. Binds MHC class II (MHC-II); the precise role of MHC-II-binding is however unclear. Functionally, may function as a ligand for MHC class II (MHC-II) on antigen-presenting cells (APC), promoting APC activation/maturation and driving Th1 immune response. This is Lymphocyte activation gene 3 protein from Homo sapiens (Human).